Reading from the N-terminus, the 860-residue chain is DNA mismatch repair protein MutS (860 aa).

ATP is bound at residue 607–614 (GPNMSGKS).

It belongs to the DNA mismatch repair MutS family.

Its function is as follows. This protein is involved in the repair of mismatches in DNA. It is possible that it carries out the mismatch recognition step. This protein has a weak ATPase activity. This is DNA mismatch repair protein MutS from Listeria monocytogenes serovar 1/2a (strain ATCC BAA-679 / EGD-e).